The sequence spans 1548 residues: Multidrug resistance protein (1548 aa).

Residues 1–238 are Cytoplasmic-facing; it reads MVDNGHVTIA…YHVWAQILPK (238 aa). The 284-residue stretch at 231–514 folds into the ABC transmembrane type-1 1 domain; it reads VWAQILPKLL…IPIIISSILQ (284 aa). The chain crosses the membrane as a helical span at residues 239-256; sequence LLSDVTALMLPVLLEYFV. Residue asparagine 263 is glycosylated (N-linked (GlcNAc...) asparagine). Helical transmembrane passes span 266 to 287, 349 to 367, 375 to 392, 463 to 480, and 500 to 519; these read WGWG…SCSA, VMYF…LLLI, VPGM…AVIS, ATPT…HVSG, and VSFF…FVSA. The Cytoplasmic segment spans residues 520–932; it reads KRVTAFIECP…PWSTYVAYLK (413 aa). Residues 634–855 enclose the ABC transporter 1 domain; sequence VEEGDREYYQ…ALEETLRGEL (222 aa). Residue 667 to 674 participates in ATP binding; the sequence is GSTGSGKS. 4 helical membrane-spanning segments follow: residues 933–950, 975–993, 1051–1070, and 1072–1088; these read SCGG…FALT, TYLY…GSPL, GYLY…IIMV, and VQPF…YSYY. Residues 940-1221 enclose the ABC transmembrane type-1 2 domain; the sequence is WGCLLATFAL…LVRQVAMVEA (282 aa). Asparagine 1095 and asparagine 1154 each carry an N-linked (GlcNAc...) asparagine glycan. A run of 2 helical transmembrane segments spans residues 1164 to 1182 and 1186 to 1205; these read LEFL…GVIG and GASS…SMTL. Residues 1206 to 1548 lie on the Cytoplasmic side of the membrane; sequence TETLNWLVRQ…RIVQPAVLSD (343 aa). Positions 1286 to 1521 constitute an ABC transporter 2 domain; that stretch reads LVLEGVQMRY…HQSMFHSMVE (236 aa). Residue 1320–1327 coordinates ATP; that stretch reads GRTGSGKS.

This sequence belongs to the ABC transporter superfamily. ABCB family. Multidrug resistance exporter (TC 3.A.1.201) subfamily.

Its subcellular location is the membrane. The enzyme catalyses ATP + H2O + xenobioticSide 1 = ADP + phosphate + xenobioticSide 2.. The protein is Multidrug resistance protein (PGPA) of Leishmania tarentolae (Sauroleishmania tarentolae).